A 294-amino-acid chain; its full sequence is MANNIPIGSAVRTQVIINRYFVKAKKNLGQNFLIDQNAILGIVEAADIHAGDQVIEIGPGIGSLTEQLLLAGAKVFAYEVDDSLPEILQNELPKKIGDAPLEDRFKLMLKDVLKANFKEDLAGFFDMSKPIKVVANLPYYITTPIIFALAESDLHFASLTLMMQKEVAERLEAKPGSKEYGPLTISVQTEMDVKVALEVNHNSFMPRPKVDSSVVVLTPLKNKPEIENRKHFVWVVKMCFSQRRKTLNNNLKTLIPDSEKREALIKKLGVDPRVRPENLTIEQFIEIARNIPAK.

S-adenosyl-L-methionine contacts are provided by asparagine 31, leucine 33, glycine 58, glutamate 79, aspartate 111, and asparagine 136.

Belongs to the class I-like SAM-binding methyltransferase superfamily. rRNA adenine N(6)-methyltransferase family. RsmA subfamily.

It localises to the cytoplasm. It catalyses the reaction adenosine(1518)/adenosine(1519) in 16S rRNA + 4 S-adenosyl-L-methionine = N(6)-dimethyladenosine(1518)/N(6)-dimethyladenosine(1519) in 16S rRNA + 4 S-adenosyl-L-homocysteine + 4 H(+). Its function is as follows. Specifically dimethylates two adjacent adenosines (A1518 and A1519) in the loop of a conserved hairpin near the 3'-end of 16S rRNA in the 30S particle. May play a critical role in biogenesis of 30S subunits. The protein is Ribosomal RNA small subunit methyltransferase A of Lactobacillus helveticus (strain DPC 4571).